The chain runs to 460 residues: tRNA-splicing endonuclease subunit Sen2 (460 aa).

Positions 143 to 215 (EKEETPQHEP…SPSSHNGHVA (73 aa)) are disordered. A compositionally biased stretch (basic and acidic residues) spans 159 to 170 (SSLEGRVEKDEL). Residues Tyr-364 and His-372 contribute to the active site. Ser-403, Ser-406, and Ser-410 each carry phosphoserine. Residue Lys-411 is part of the active site.

It belongs to the tRNA-intron endonuclease family. In terms of assembly, tRNA splicing endonuclease is a heterotetramer composed of TSEN2, TSEN15, TSEN34/LENG5 and TSEN54. tRNA splicing endonuclease complex also contains proteins of the pre-mRNA 3'-end processing machinery such as CLP1, CPSF1, CPSF4 and CSTF2.

It is found in the nucleus. The protein localises to the nucleolus. It catalyses the reaction pretRNA = a 3'-half-tRNA molecule with a 5'-OH end + a 5'-half-tRNA molecule with a 2',3'-cyclic phosphate end + an intron with a 2',3'-cyclic phosphate and a 5'-hydroxyl terminus.. Its function is as follows. Constitutes one of the two catalytic subunit of the tRNA-splicing endonuclease complex, a complex responsible for identification and cleavage of the splice sites in pre-tRNA. It cleaves pre-tRNA at the 5'- and 3'-splice sites to release the intron. The products are an intron and two tRNA half-molecules bearing 2',3'-cyclic phosphate and 5'-OH termini. There are no conserved sequences at the splice sites, but the intron is invariably located at the same site in the gene, placing the splice sites an invariant distance from the constant structural features of the tRNA body. Probably carries the active site for 5'-splice site cleavage. The tRNA splicing endonuclease is also involved in mRNA processing via its association with pre-mRNA 3'-end processing factors, establishing a link between pre-tRNA splicing and pre-mRNA 3'-end formation, suggesting that the endonuclease subunits function in multiple RNA-processing events. The protein is tRNA-splicing endonuclease subunit Sen2 (Tsen2) of Mus musculus (Mouse).